A 354-amino-acid polypeptide reads, in one-letter code: UDP-N-acetylglucosamine--N-acetylmuramyl-(pentapeptide) pyrophosphoryl-undecaprenol N-acetylglucosamine transferase (354 aa).

UDP-N-acetyl-alpha-D-glucosamine is bound by residues threonine 11 to glycine 13, arginine 164, serine 194, and glutamine 289.

It belongs to the glycosyltransferase 28 family. MurG subfamily.

The protein localises to the cell membrane. The catalysed reaction is di-trans,octa-cis-undecaprenyl diphospho-N-acetyl-alpha-D-muramoyl-L-alanyl-D-glutamyl-meso-2,6-diaminopimeloyl-D-alanyl-D-alanine + UDP-N-acetyl-alpha-D-glucosamine = di-trans,octa-cis-undecaprenyl diphospho-[N-acetyl-alpha-D-glucosaminyl-(1-&gt;4)]-N-acetyl-alpha-D-muramoyl-L-alanyl-D-glutamyl-meso-2,6-diaminopimeloyl-D-alanyl-D-alanine + UDP + H(+). It participates in cell wall biogenesis; peptidoglycan biosynthesis. In terms of biological role, cell wall formation. Catalyzes the transfer of a GlcNAc subunit on undecaprenyl-pyrophosphoryl-MurNAc-pentapeptide (lipid intermediate I) to form undecaprenyl-pyrophosphoryl-MurNAc-(pentapeptide)GlcNAc (lipid intermediate II). The protein is UDP-N-acetylglucosamine--N-acetylmuramyl-(pentapeptide) pyrophosphoryl-undecaprenol N-acetylglucosamine transferase of Lachnospira eligens (strain ATCC 27750 / DSM 3376 / VPI C15-48 / C15-B4) (Eubacterium eligens).